The primary structure comprises 130 residues: Histone H2A type 2-B (130 aa).

The interval 1-22 is disordered; it reads MSGRGKQGGKARAKAKSRSSRA. Position 2 is an N-acetylserine (Ser-2). The residue at position 2 (Ser-2) is a Phosphoserine; by RPS6KA5. A Citrulline; alternate modification is found at Arg-4. Symmetric dimethylarginine; by PRMT5; alternate is present on Arg-4. N6-(2-hydroxyisobutyryl)lysine; alternate is present on residues Lys-6 and Lys-10. At Lys-6 the chain carries N6-(beta-hydroxybutyryl)lysine; alternate. Residues 7 to 19 are compositionally biased toward basic residues; sequence QGGKARAKAKSRS. An N6-lactoyllysine; alternate modification is found at Lys-10. An N6-succinyllysine; alternate modification is found at Lys-10. Glycyl lysine isopeptide (Lys-Gly) (interchain with G-Cter in ubiquitin) cross-links involve residues Lys-14 and Lys-16. Lys-37 carries the N6-(2-hydroxyisobutyryl)lysine; alternate modification. Lys-37 bears the N6-(beta-hydroxybutyryl)lysine; alternate mark. Lys-37 is subject to N6-crotonyllysine; alternate. N6-(2-hydroxyisobutyryl)lysine is present on residues Lys-75 and Lys-76. Position 96 is an N6-(2-hydroxyisobutyryl)lysine; alternate (Lys-96). Lys-96 is subject to N6-succinyllysine; alternate. Residue Lys-96 is modified to N6-glutaryllysine; alternate. An N5-methylglutamine modification is found at Gln-105. Position 119 is an N6-(2-hydroxyisobutyryl)lysine; alternate (Lys-119). Lys-119 and Lys-120 each carry N6-crotonyllysine; alternate. N6-glutaryllysine; alternate occurs at positions 119 and 120. Lys-120 bears the N6-(beta-hydroxybutyryl)lysine; alternate mark. Lys-120 participates in a covalent cross-link: Glycyl lysine isopeptide (Lys-Gly) (interchain with G-Cter in ubiquitin); alternate. Thr-121 is modified (phosphothreonine; by DCAF1).

Belongs to the histone H2A family. The nucleosome is a histone octamer containing two molecules each of H2A, H2B, H3 and H4 assembled in one H3-H4 heterotetramer and two H2A-H2B heterodimers. The octamer wraps approximately 147 bp of DNA. Post-translationally, deiminated on Arg-4 in granulocytes upon calcium entry. Monoubiquitination of Lys-120 (H2AK119Ub) by RING1, TRIM37 and RNF2/RING2 complex gives a specific tag for epigenetic transcriptional repression and participates in X chromosome inactivation of female mammals. It is involved in the initiation of both imprinted and random X inactivation. Ubiquitinated H2A is enriched in inactive X chromosome chromatin. Ubiquitination of H2A functions downstream of methylation of 'Lys-27' of histone H3 (H3K27me). H2AK119Ub by RNF2/RING2 can also be induced by ultraviolet and may be involved in DNA repair. Following DNA double-strand breaks (DSBs), it is ubiquitinated through 'Lys-63' linkage of ubiquitin moieties by the E2 ligase UBE2N and the E3 ligases RNF8 and RNF168, leading to the recruitment of repair proteins to sites of DNA damage. Ubiquitination at Lys-14 and Lys-16 (H2AK13Ub and H2AK15Ub, respectively) in response to DNA damage is initiated by RNF168 that mediates monoubiquitination at these 2 sites, and 'Lys-63'-linked ubiquitin are then conjugated to monoubiquitin; RNF8 is able to extend 'Lys-63'-linked ubiquitin chains in vitro. Deubiquitinated by USP51 at Lys-14 and Lys-16 (H2AK13Ub and H2AK15Ub, respectively) after damaged DNA is repaired. H2AK119Ub and ionizing radiation-induced 'Lys-63'-linked ubiquitination (H2AK13Ub and H2AK15Ub) are distinct events. In terms of processing, phosphorylation on Ser-2 (H2AS1ph) is enhanced during mitosis. Phosphorylation on Ser-2 by RPS6KA5/MSK1 directly represses transcription. Acetylation of H3 inhibits Ser-2 phosphorylation by RPS6KA5/MSK1. Phosphorylation at Thr-121 (H2AT120ph) by DCAF1 is present in the regulatory region of many tumor suppresor genes and down-regulates their transcription. Post-translationally, symmetric dimethylation on Arg-4 by the PRDM1/PRMT5 complex may play a crucial role in the germ-cell lineage. Glutamine methylation at Gln-105 (H2AQ104me) by FBL is specifically dedicated to polymerase I. It is present at 35S ribosomal DNA locus and impairs binding of the FACT complex. In terms of processing, crotonylation (Kcr) is specifically present in male germ cells and marks testis-specific genes in post-meiotic cells, including X-linked genes that escape sex chromosome inactivation in haploid cells. Crotonylation marks active promoters and enhancers and confers resistance to transcriptional repressors. It is also associated with post-meiotically activated genes on autosomes. Post-translationally, hydroxybutyrylation of histones is induced by starvation. Lactylated in macrophages by EP300/P300 by using lactoyl-CoA directly derived from endogenous or exogenous lactate, leading to stimulates gene transcription.

The protein localises to the nucleus. The protein resides in the chromosome. Functionally, core component of nucleosome. Nucleosomes wrap and compact DNA into chromatin, limiting DNA accessibility to the cellular machineries which require DNA as a template. Histones thereby play a central role in transcription regulation, DNA repair, DNA replication and chromosomal stability. DNA accessibility is regulated via a complex set of post-translational modifications of histones, also called histone code, and nucleosome remodeling. This chain is Histone H2A type 2-B, found in Mus musculus (Mouse).